A 294-amino-acid polypeptide reads, in one-letter code: MASVQLRNVTKAWGDVVVSKDINLEIQDGEFVVFVGPSGCGKSTLLRMIAGLETVTSGDLFIGDTRMNDVPPAERGIGMVFQSYALYPHLSVAENMSFGLKLAGAKKEVINQRVTQVAEVLQLAHLLERNRKALSGGQRPGVAIRTLVAEPRVFLLDEPLSNLDAALRVQMRIEISRLHKRLGRTMIYVTHDQVEAMTLADKIVVLDAGRVAQVGKPLELYHYPADRFVAGFIGSPKMNFLPVKVTATAIEQVQVELPNRQQVWLPVDSAHVQVGANMSLGIRPEHLLPSDIAD.

Positions 4–233 (VQLRNVTKAW…PADRFVAGFI (230 aa)) constitute an ABC transporter domain. 36-43 (GPSGCGKS) contributes to the ATP binding site.

The protein belongs to the ABC transporter superfamily. Maltooligosaccharide importer (TC 3.A.1.1.1) family. The complex is composed of two ATP-binding proteins (MalK), two transmembrane proteins (MalG and MalK) and a solute-binding protein (MalE).

Its subcellular location is the cell inner membrane. The catalysed reaction is D-maltose(out) + ATP + H2O = D-maltose(in) + ADP + phosphate + H(+). Its function is as follows. Part of the ABC transporter complex MalEFGK involved in maltose/maltodextrin import. Responsible for energy coupling to the transport system. The sequence is that of Maltose/maltodextrin import ATP-binding protein MalK from Klebsiella aerogenes (Enterobacter aerogenes).